A 185-amino-acid chain; its full sequence is CASP-like protein 5A1 (185 aa).

Topologically, residues 1-48 (MNVSHPAVHPVGVPPALGGQAVPPRMRMRVRMEYLVFQGMPLPGSLGG) are cytoplasmic. A helical transmembrane segment spans residues 49–69 (LMLRLGQFCSALIAFSVMVSI). Residues 70–76 (RDFSVTA) lie on the Extracellular side of the membrane. Residues 77–97 (FCYLLAATVLQCLWSLALAVI) traverse the membrane as a helical segment. Over 98-121 (DVYALLVKRSLRNPLLVSIFVVGD) the chain is Cytoplasmic. A helical membrane pass occupies residues 122–142 (GVTATLTFAAACASAGVVVLI). The Extracellular portion of the chain corresponds to 143 to 160 (GNDISMCKSNPCANYEAA). Residues 161-181 (IIMAFLSWFMVSISFVLTFWM) traverse the membrane as a helical segment. Residues 182–185 (LATL) are Cytoplasmic-facing.

It belongs to the Casparian strip membrane proteins (CASP) family. In terms of assembly, homodimer and heterodimers.

Its subcellular location is the cell membrane. The sequence is that of CASP-like protein 5A1 from Pinus contorta (Shore pine).